A 503-amino-acid chain; its full sequence is Carboxyl-terminal PDZ ligand of neuronal nitric oxide synthase protein (503 aa).

One can recognise a PID domain in the interval 26-191 (FQHGISFEAK…ESERNSDGSG (166 aa)). A disordered region spans residues 170–212 (HTQQNADGQEDGESERNSDGSGDPGRQLTGAERVSTATAEETD). A phosphoserine mark is found at Ser-183, Ser-187, Ser-190, and Ser-262. The segment at 266–285 (LLPSSSSSKPPGLGTGTPLS) is disordered. Positions 319 to 360 (AAEAAARLEAQARVHQLLLQNKDMLQHISLLVKQVQELELKL) form a coiled coil. A phosphoserine mark is found at Ser-368, Ser-371, Ser-398, and Ser-414. Residues 491–503 (QELGDSLDDEIAV) are interaction with NOS1. Residues 501–503 (IAV) carry the PDZ-binding motif.

In terms of assembly, interacts with the PDZ domain of NOS1 or the second PDZ domain of DLG4 through its C-terminus. Interacts with RASD1 and SYN1, SYN2 and SYN3 via its PID domain. Forms a ternary complex with NOS1 and RASD1. Forms a ternary complex with NOS1 and SYN1. Mainly expressed in brain. Highly expressed in accessory olfactory bulb, caudate-putamen, cerebellum, cerebral cortex, dentate gyrus of the hippocampus, islands of Calleja, olfactory bulb and supraoptic nucleus. Expressed in kidney glomeruli podocytes (at protein level).

It is found in the cell projection. Its subcellular location is the filopodium. It localises to the podosome. Functionally, adapter protein involved in neuronal nitric-oxide (NO) synthesis regulation via its association with nNOS/NOS1. The complex formed with NOS1 and synapsins is necessary for specific NO and synapsin functions at a presynaptic level. Mediates an indirect interaction between NOS1 and RASD1 leading to enhance the ability of NOS1 to activate RASD1. Competes with DLG4 for interaction with NOS1, possibly affecting NOS1 activity by regulating the interaction between NOS1 and DLG4. In kidney podocytes, plays a role in podosomes and filopodia formation through CDC42 activation. This is Carboxyl-terminal PDZ ligand of neuronal nitric oxide synthase protein from Rattus norvegicus (Rat).